The sequence spans 373 residues: Ubiquitin domain-containing protein DSK2 (373 aa).

One can recognise a Ubiquitin-like domain in the interval 1-76 (MSLNIHIKSG…SVHLVKSQPK (76 aa)). Glycyl lysine isopeptide (Lys-Gly) (interchain with G-Cter in ubiquitin) cross-links involve residues Lys13 and Lys76. Residues 221 to 270 (DPNAGMGSAGGAASAFPAPGGDAPEEGSNTNTTSSSNTGNNAGTNAGTNA) are disordered. Low complexity predominate over residues 231 to 270 (GAASAFPAPGGDAPEEGSNTNTTSSSNTGNNAGTNAGTNA). One can recognise a UBA domain in the interval 327–371 (PPEERYEHQLRQLNDMGFFDFDRNVAALRRSGGSVQGALDSLLNG).

The protein localises to the nucleus. In terms of biological role, involved, with RAD23 in spindle pole body duplication. Involved in the ubiquitin-proteasome proteolytic pathway. The sequence is that of Ubiquitin domain-containing protein DSK2 (DSK2) from Saccharomyces cerevisiae (strain ATCC 204508 / S288c) (Baker's yeast).